A 370-amino-acid chain; its full sequence is Keratin-associated protein 10-7 (370 aa).

The interval 36–363 (DCPESCCEPP…CSRPACCGPT (328 aa)) is 30 X 5 AA repeats of C-C-X(3). 30 tandem repeats follow at residues 41-45 (CCEPP), 46-50 (CCAPA), 67-71 (CCRVT), 89-93 (CCQQS), 99-103 (CCASS), 109-113 (CCVPV), 114-118 (CCKTV), 119-123 (CCKPV), 135-139 (CCQQS), 145-149 (CCTSS), 155-159 (CCVPI), 160-164 (CCKPV), 172-176 (CCQQS), 186-190 (CCQAV), 208-212 (CCQQS), 218-222 (CCTSS), 228-232 (CCVPV), 233-237 (CCKPV), 238-242 (CCVPT), 250-254 (CCQPA), 255-259 (CCTSS), 265-269 (CCVPV), 270-274 (CCKPV), 275-279 (CCVPV), 287-291 (CCQQS), 297-301 (CCTTS), 302-306 (CCRPS), 321-325 (CCVPV), 339-343 (CCRPA), and 359-363 (CCGPT).

It belongs to the KRTAP type 10 family. As to quaternary structure, interacts with hair keratins. As to expression, restricted to a narrow region of the hair fiber cuticle, lying approximately 20 cell layers above the apex of the dermal papilla of the hair root; not detected in any other tissues.

In the hair cortex, hair keratin intermediate filaments are embedded in an interfilamentous matrix, consisting of hair keratin-associated proteins (KRTAP), which are essential for the formation of a rigid and resistant hair shaft through their extensive disulfide bond cross-linking with abundant cysteine residues of hair keratins. The matrix proteins include the high-sulfur and high-glycine-tyrosine keratins. This chain is Keratin-associated protein 10-7 (KRTAP10-7), found in Homo sapiens (Human).